Reading from the N-terminus, the 2919-residue chain is Cadherin EGF LAG seven-pass G-type receptor 2 (2919 aa).

An N-terminal signal peptide occupies residues 1–31 (MRSRAASAPLPTPLLPLLLLLLLLPPSPLLG). Residues 32 to 2380 (DQVGPCRSLG…GEILPLKTLT (2349 aa)) lie on the Extracellular side of the membrane. The tract at residues 156-194 (LRAGEGSPEESLGGRRKRNVNTAPQFQPPSYQATVPENQ) is disordered. The span at 175–194 (VNTAPQFQPPSYQATVPENQ) shows a compositional bias: polar residues. 9 Cadherin domains span residues 182 to 289 (QPPS…DPVF), 290 to 399 (EQQE…APQF), 400 to 505 (SEKR…APIF), 506 to 610 (VSTP…NPTF), 611 to 712 (TQPE…RPVF), 713 to 815 (QSSH…APQF), 816 to 921 (LRDS…PPVF), 922 to 1023 (EQDE…PPVL), and 1028 to 1146 (ILFN…SPLL). N-linked (GlcNAc...) asparagine glycans are attached at residues N486, N557, and N701. N1036, N1076, N1182, and N1212 each carry an N-linked (GlcNAc...) asparagine glycan. Residues 1228–1286 (DDNICLREPCENYMRCVSVLRFDSSAPFIASSSVLFRPIHPVGGLRCRCPPGFTGDYCE) form the EGF-like 1; atypical domain. Residues 1288 to 1318 (EVDLCYSRPCGPHGRCRSREGGYTCLCLDGY) enclose the EGF-like 2; calcium-binding domain. Intrachain disulfides connect C1292–C1303, C1297–C1312, C1314–C1323, C1332–C1343, C1337–C1353, and C1355–C1365. Positions 1328–1366 (HSGRCTPGVCKNGGTCVNLLVGGFKCDCPSGDFEKPFCQ) constitute an EGF-like 3; calcium-binding domain. The Laminin G-like 1 domain maps to 1367–1571 (VTTRSFPARS…IANNGTVPGC (205 aa)). N1501 and N1565 each carry an N-linked (GlcNAc...) asparagine glycan. Intrachain disulfides connect C1545/C1571, C1578/C1589, C1583/C1598, and C1600/C1609. An EGF-like 4; calcium-binding domain is found at 1574–1610 (KKIVCDSSICHNGGTCVNQWNAFSCECPLGFGGKSCA). A (3R)-3-hydroxyasparagine modification is found at N1591. Residues 1614-1791 (ANPQRFLGSS…GESINVEPGC (178 aa)) enclose the Laminin G-like 2 domain. The N-linked (GlcNAc...) asparagine glycan is linked to N1741. In terms of domain architecture, EGF-like 5; calcium-binding spans 1787–1829 (VEPGCSWPDPCDSNPCPTNSYCSNDWDSYSCSCVLGYYGDNCT). Cystine bridges form between C1791–C1802, C1797–C1817, C1819–C1828, C1832–C1843, C1837–C1855, C1857–C1866, C1887–C1899, C1889–C1906, C1908–C1921, C1924–C1936, C1926–C1943, C1945–C1954, and C1957–C1969. A glycan (N-linked (GlcNAc...) asparagine) is linked at N1827. The 38-residue stretch at 1830-1867 (NVCDLNPCEHQSVCTRKPNTPHGYICECLPNYLGPYCE) folds into the EGF-like 6; calcium-binding domain. The EGF-like 7; calcium-binding domain occupies 1883 to 1922 (TCGPCNCDVSKGFDPDCNKTSGECHCKENHYRPPGSPTCL). An N-linked (GlcNAc...) asparagine glycan is attached at N1900. The 48-residue stretch at 1924–1971 (CDCYPTGSLSRVCDPEDGQCPCKPGVIGRQCDRCDNPFAEVTTNGCEV) folds into the Laminin EGF-like domain. Residues N2024, N2043, and N2061 are each glycosylated (N-linked (GlcNAc...) asparagine). The region spanning 2199–2369 (ETTVILPESV…AVLMDMSRRE (171 aa)) is the GAIN-B domain. Residues 2216–2241 (VRSAGPGEAQETEELARRQRRHPELS) are disordered. 2 cysteine pairs are disulfide-bonded: C2319–C2351 and C2339–C2353. The segment at 2319 to 2369 (CVFWNHSILVSGTGGWSARGCEVVFRNESHVSCQCNHMTSFAVLMDMSRRE) is GPS. N2323 and N2345 each carry an N-linked (GlcNAc...) asparagine glycan. A helical transmembrane segment spans residues 2381-2401 (YVALGVTLAALMLTFLFLTLL). Residues 2402–2413 (RALRSNQHGIRR) are Cytoplasmic-facing. A helical membrane pass occupies residues 2414 to 2433 (NLTAALGLAQLVFLLGINQA). The Extracellular segment spans residues 2434 to 2438 (DLPFA). The helical transmembrane segment at 2439–2459 (CTVIAILLHFLYLCTFSWALL) threads the bilayer. The Cytoplasmic segment spans residues 2460-2480 (EALHLYRALTEVRDVNASPMR). A helical transmembrane segment spans residues 2481 to 2501 (FYYMLGWGVPAFITGLAVGLD). At 2502 to 2518 (PEGYGNPDFCWLSVYDT) the chain is on the extracellular side. A helical membrane pass occupies residues 2519–2539 (LIWSFAGPVAFAVSMSVFLYI). At 2540–2563 (LSARASCAAQRQGFEKKGPVSGLR) the chain is on the cytoplasmic side. The helical transmembrane segment at 2564 to 2584 (SSFTVLLLLSATWLLALLSVN) threads the bilayer. The Extracellular segment spans residues 2585–2591 (SDTLLFH). A helical membrane pass occupies residues 2592–2612 (YLFAACNCVQGPFIFLSYVVL). The Cytoplasmic portion of the chain corresponds to 2613–2919 (SKEVRKALKF…SEFLFFNFLH (307 aa)). The interval 2690–2884 (LNPGQVPPGL…PPRPPPRQSL (195 aa)) is disordered. The segment covering 2718–2730 (TDSDSDLSLEDDQ) has biased composition (acidic residues). Residues 2791–2800 (GTTTKENSGS) show a composition bias toward polar residues. The span at 2803-2815 (LEERPRENGDALT) shows a compositional bias: basic and acidic residues. Residues 2857 to 2868 (GTGSSRGSSISE) are compositionally biased toward low complexity.

The protein belongs to the G-protein coupled receptor 2 family. LN-TM7 subfamily. As to quaternary structure, heterodimer of 2 chains generated by proteolytic processing; the large extracellular N-terminal fragment and the membrane-bound C-terminal fragment predominantly remain associated and non-covalently linked. Post-translationally, the iron and 2-oxoglutarate dependent 3-hydroxylation of aspartate and asparagine is (R) stereospecific within EGF domains. In terms of processing, autoproteolytically processed at the GPS region of the GAIN-B domain; this cleavage modulates receptor activity. In terms of tissue distribution, expressed in the CNS and in the eye.

It localises to the cell membrane. Its function is as follows. Receptor that may have an important role in cell/cell signaling during nervous system formation. The sequence is that of Cadherin EGF LAG seven-pass G-type receptor 2 from Mus musculus (Mouse).